A 416-amino-acid polypeptide reads, in one-letter code: Cotranscriptional regulator ARB2A (416 aa).

The first 18 residues, Met-1 to Ala-18, serve as a signal peptide directing secretion. The tract at residues Lys-208–Tyr-247 is disordered. The span at Pro-223–Glu-236 shows a compositional bias: basic and acidic residues. Ser-293 acts as the Nucleophile in catalysis. Residues His-413–Leu-416 carry the Prevents secretion from ER motif.

Belongs to the ARB2A family. Interacts with AGO2. Found in a complex, composed of AGO2, CHD7 and ARB2A.

It localises to the nucleus. The protein localises to the cytoplasm. It is found in the endoplasmic reticulum. Plays a role in the regulation of alternative splicing, by interacting with AGO2 and CHD7. Seems to be required for stabilizing protein-protein interactions at the chromatin-spliceosome interface. May have hydrolase activity. The chain is Cotranscriptional regulator ARB2A from Homo sapiens (Human).